Consider the following 7094-residue polypeptide: MSKINKYGLELHWAPEFPWMFEDAEEKLDNPSSSEVDIVCSTTAQKLETGGICPENHVMVDCRRLLKQECCVQSSLIREIVMNTRPYDLEVLLQDALQSREAVLVTPPLGMSLEACYVRGCNPNGWTMGLFRRRSVCNTGRCAVNKHVAYQLYMIDPAGVCFGAGQFVGWVIPLAFMPVQSRKFIVPWVMYLRKCGEKGAYNKDHKRGGFEHVYNFKVEDAYDLVHDEPKGKFSKKAYALIRGYRGVKPLLYVDQYGCDYTGGLADGLEAYADKTLQEMKALFPIWSQELPFDVTVAWHVVRDPRYVMRLQSASTIRSVAYVANPTEDLCDGSVVIKEPVHVYADDSIILRQHNLVDIMSCFYMEADAVVNAFYGVDLKDCGFVMQFGYIDCEQDLCDFKGWVPGNMIDGFACTTCGHVYETGDLLAQSSGVLPVNPVLHTKSAAGYGGFGCKDSFTLYGQTVVYFGGCVYWSPARNIWIPILKSSVKSYDGLVYTGVVGCKAIVKETNLICKALYLDYVQHKCGNLHQRELLGVSDVWHKQLLLNRGVYKPLLENIDYFNMRRAKFSLETFTVCADGFMPFLLDDLVPRAYYLAVSGQAFCDYADKICHAVVSKSKELLDVSLDSLSAAIHYLNSKIVDLAQHFSDFGTSFVSKIVHFFKTFTTSTALAFAWVLFHVLHGAYIVVESDIYFVKNIPRYASAVAQAFRSVAKVVLDSLRVTFIDGLSCFKIGRRRICLSGSKIYEVERGLLHSSQLPLDVYDLTMPSQVQKAKQKPIYLKGSGSDFSLADSVVEVVTTSLTPCGYSEPPKVADKICIVDNVYMAKAGDKYYPVVVDGHVGLLDQAWRVPCAGRRVTFKEQPTVNEIASTPKTIKVFYELDKDFNTILNTACGVFEVDDTVDMEEFYAVVIDAIEEKLSPCKELEGVGAKVSAFLQKLEDNSLFLFDEAGEEVLASKLYCAFTAPEDDDFLEESGVEEDDVEGEETDLTVTSAGEPCVASEQEESSEILEDTLDDGPCVETSDSQVEEDVEMSDFADLESVIQDYENVCFEFYTTEPEFVKVLDLYVPKATRNNCWLRSVLAVMQKLPCQFKDKNLQDLWVLYKQQYSQLFVDTLVNKIPANIVVPQGGYVADFAYWFLTLCDWQCVAYWKCIKCDLALKLKGLDAMFFYGDVVSHVCKCGESMVLIDVDVPFTAHFALKDKLFCAFITKRSVYKAACVVDVNDSHSMAVVDGKQIDDHRVTSITSDKFDFIIGHGMSFSMTTFEIAQLYGSCITPNVCFVKGDIIKVSKRVKAEVVVNPANGHMAHGGGVAKAIAVAAGQQFVKETTDMVKSKGVCATGDCYVSTGGKLCKTVLNVVGPDARTQGKQSYALLERVYKHLNKYDCVVTTLISAGIFSVPSDVSLTYLLGTAEKQVVLVSNNQEDFDLISKCQITAVEGTKKLAERLSFNVGRSIVYETDANKLILSNDVAFVSTFNVLQDVLSLRHDIALDDDARTFVQSNVDVVPEGWRVVNKFYQINGVRTVKYFECPGGIDICSQDKVFGYVQQGSFNKATVAQIKALFLDKVDILLTVDGVNFTNRFVPVGESFGKSLGNVFCDGVNVTKHKCDINYKGKVFFQFDNLSSEDLKAVRSSFNFDQKELLAYYNMLVNCSKWQVVFNGKYFTFKQANNNCFVNVSCLMLQSLNLKFKIVQWQEAWLEFRSGRPARFVSLVLAKGGFKFGDPADSRDFLRVVFSQVDLTGAICDFEIACKCGVKQEQRTGVDAVMHFGTLSREDLEIGYTVDCSCGKKLIHCVRFDVPFLICSNTPASVKLPKGVGSANIFKGDKVGHYVHVKCEQSYQLYDASNVKKVTDVTGNLSDCLYLKNLKQTFKSVLTTYYLDDVKKIEYNPDLSQYYCDGGKYYTQRIIKAQFKTFEKVDGVYTNFKLIGHTICDILNAKLGFDSSKEFVEYKVTEWPTATGDVVLATDDLYVKRYERGCITFGKPVIWLSHEQASLNSLTYFNRPLLVDENKFDVLKVDDVDDGGDISESDAKESKEINIIKLSGVKKPFKVEDSVIVNDDTSEIKYVKSLSIVDVYDMWLTGCRYVVRTANALSMAVNVPTIRKFIKFGMTLVSIPIDLLNLREIKPVFNVVKAVRNKISACFNFIKWLFVLLFGWIKISADNKVIYTTEVASKLTCKLVALAFKNAFLTFKWSVVARGACIIATIFLLWFNFIYANVIFSDFYLPKIGFLPTFVGKIAQWIKSTFSLVTICDLYSIQDVGFKNQYCNGSIACQFCLAGFDMLDNYKAIDVVQYEADRRAFVDYTGVLKIVIELIVSYALYTAWFYPLFALISIQILTTWLPELFMLSTLHWSVRLLVSLANMLPAHVFMRFYIIIASFIKLFILFRHVAYGCSKPGCLFCYKRNRSLRVKCSTIVGGMIRYYDVMANGGTGFCSKHQWNCIDCDSYKPGNTFITVEAALDLSKELKRPIQPTDVAYHTVTDVKQVGCYMRLFYERDGQRTYDDVNASLFVDYSNLLHSKVKGVPNMHVVVVENDADKANFLNAAVFYAQSLFRPILMVDKNLITTANTGTSVTETMFDVYVDTFLSMFDVDKKSLNALIATAHSSIKQGTQICKVLDTFLSCARKSCSIDSDVDTKCLADSVMSAVSAGLELTDESCNNLVPTYLKGDNIVAADLGVLIQNSAKHVQGNVAKIAGVSCIWSVDAFNQLSSDFQHKLKKACCKTGLKLKLTYNKQMANVSVLTTPFSLKGGAVFSYFVYVCFLLSLVCFIGLWCLMPTYTVHKSDFQLPVYASYKVLDNGVIRDVSVEDVCFANKFEQFDQWYESTFGLSYYSNSMACPIVVAVVDQDLGSTVFNVPTKVLRYGYHVLHFITHALSADGVQCYTPHSQISYSNFYASGCVLSSACTMFAMADGSPQPYCYTEGLMQNASLYSSLVPHVRYNLANAKGFIRFPEVLREGLVRIVRTRSMSYCRVGLCEEADEGICFNFNGSWVLNNDYYRSLPGTFCGRDVFDLIYQLFKGLAQPVDFLALTASSIAGAILAVIVVLVFYYLIKLKRAFGDYTSIVFVNVIVWCVNFMMLFVFQVYPTLSCVYAICYFYATLYFPSEISVIMHLQWLVMYGTIMPLWFCLLYISVVVSNHAFWVFAYCRRLGTSVRSDGTFEEMALTTFMITKDSYCKLKNSLSDVAFNRYLSLYNKYRYYSGKMDTAAYREAACSQLAKAMDTFTNNNGSDVLYQPPTASVSTSFLQSGIVKMVNPTSKVEPCIVSVTYGNMTLNGLWLDDKVYCPRHVICSASDMTNPDYTNLLCRVTSSDFTVLFDRLSLTVMSYQMQGCMLVLTVTLQNSRTPKYTFGVVKPGETFTVLAAYNGKPQGAFHVTMRSSYTIKGSFLCGSCGSVGYVLMGDCVKFVYMHQLELSTGCHTGTDFNGDFYGPYKDAQVVQLPVQDYIQSVNFVAWLYAAILNNCNWFVQSDKCSVEDFNVWALSNGFSQVKSDLVIDALASMTGVSLETLLAAIKRLKNGFQGRQIMGSCSFEDELTPSDVYQQLAGIKLQSKRTRLVKGIVCWIMASTFLFSCIITAFVKWTMFMYVTTNMLSITFCALCVISLAMLLVKHKHLYLTMYIIPVLFTLLYNNYLVVYKQTFRGYVYAWLSYYVPSVEYTYTDEVIYGMLLLIGMVFVTLRSINHDLFSFIMFVGRVISVVSLWYMGSNLEEEILLMLASLFGTYTWTTALSMAAAKVIAKWVAVNVLYFTDIPQIKIVLVCYLFIGYIISCYWGLFSLMNSLFRMPLGVYNYKISVQELRYMNANGLRPPKNSFEALMLNFKLLGIGGVPIIEVSQFQSKLTDVKCANVVLLNCLQHLHVASNSKLWQYCSTLHNEILATSDLGVAFEKLAQLLIVLFANPAAVDSKCLTSIEEVCDDYAKDNTVLQALQSEFVNMASFVEYEVAKKNLDEARSSGSANQQQLKQLEKACNIAKSAYERDRAVARKLERMADLALTNMYKEARINDKKSKVVSALQTMLFSMVRKLDNQALNSILDNAVKGCVPLNAIPSLAANTLTIIVPDKSVYDQVVDNVYVTYAGNVWQIQTIQDSDGTNKQLNEISDDCNWPLVIIANRHNEVSATVLQNNELMPAKLKTQVVNSGPDQTCNTPTQCYYNNSNNGKIVYAILSDVDGLKYTKILKDDGNFVVLELDPPCKFTVQDVKGLKIKYLYFVKGCNTLARGWVVGTISSTVRLQAGTATEYASNSSILSLCAFSVDPKKTYLDFIQQGGTPIANCVKMLCDHAGTGMAITVKPDATTNQDSYGGASVCIYCRARVEHPDVDGLCKLRGKFVQVPVGIKDPVSYVLTHDVCQVCGFWRDGSCSCVSTDTTVQSKDTNFLNRVRGTSVDARLVPCASGLSTDVQLRAFDICNASVAGIGLHLKVNCCRFQRVDENGDKLDQFFVVKRTDLTIYNREMECYERVKDCKFVAEHDFFTFDVEGSRVPHIVRKDLTKYTMLDLCYALRHFDRNDCMLLCDILSIYAGCEQSYFTKKDWYDFVENPDIINVYKKLGPIFNRALVSATEFADKLVEVGLVGILTLDNQDLNGKWYDFGDYVIAAPGCGVAIADSYYSYMMPMLTMCHALDCELYVNNAYRLFDLVQYDFTDYKLELFNKYFKHWSMPYHPNTVDCQDDRCIIHCANFNILFSMVLPNTCFGPLVRQIFVDGVPFVVSIGYHYKELGIVMNMDVDTHRYRLSLKDLLLYAADPALHVASASALYDLRTCCFSVAAITSGVKFQTVKPGNFNQDFYDFILSKGLLKEGSSVDLKHFFFTQDGNAAITDYNYYKYNLPTMVDIKQLLFVLEVVYKYFEIYDGGCIPASQVIVNNYDKSAGYPFNKFGKARLYYEALSFEEQDEIYAYTKRNVLPTLTQMNLKYAISAKNRARTVAGVSILSTMTGRMFHQKCLKSIAATRGVPVVIGTTKFYGGWDDMLRRLIKDVDNPVLMGWDYPKCDRAMPNILRIVSSLVLARKHEACCSQSDRFYRLANECAQVLSEIVMCGGCYYVKPGGTSSGDATTAFANSVFNICQAVSANVCALMSCNGNKIEDLSIRALQKRLYSHVYRSDMVDSTFVTEYYEFLNKHFSMMILSDDGVVCYNSDYASKGYIANISAFQQVLYYQNNVFMSESKCWVENDINNGPHEFCSQHTMLVKMDGDDVYLPYPDPSRILGAGCFVDDLLKTDSVLLIERFVSLAIDAYPLVYHENEEYQKVFRVYLEYIKKLYNDLGNQILDSYSVILSTCDGQKFTDESFYKNMYLRSAVMQSVGACVVCSSQTSLRCGSCIRKPLLCCKCCYDHVMATDHKYVLSVSPYVCNAPGCDVNDVTKLYLGGMSYYCEDHKPQYSFKLVMNGMVFGLYKQSCTGSPYIDDFNRIASCKWTDVDDYILANECTERLKLFAAETQKATEEAFKQSYASATIQEIVSERELILSWEIGKVKPPLNKNYVFTGYHFTKNGKTVLGEYVFDKSELTNGVYYRATTTYKLSVGDVFVLTSHSVANLSAPTLVPQENYSSIRFASVYSVLETFQNNVVNYQHIGMKRYCTVQGPPGTGKSHLAIGLAVYYCTARVVYTAASHAAVDALCEKAYKFLNINDCTRIVPAKVRVECYDKFKINDTTRKYVFTTINALPEMVTDIVVVDEVSMLTNYELSVINARIRAKHYVYIGDPAQLPAPRVLLSKGTLEPKYFNTVTKLMCCLGPDIFLGTCYRCPKEIVDTVSALVYENKLKAKNESSSLCFKVYYKGVTTHESSSAVNMQQIYLINKFLKANPLWHKAVFISPYNSQNFAAKRVLGLQTQTVDSAQGSEYDYVIYSQTAETAHSVNVNRFNVAITRAKKGILCVMSNMQLFEALQFTTLTLDKVPQAVETRVQCSTNLFKDCSKSYSGYHPAHAPSFLAVDDKYKATGDLAVCLGIGDSAVTYSRLISLMGFKLDVTLDGYCKLFITKEEAVKRVRAWVGFDAEGAHATRDSIGTNFPLQLGFSTGIDFVVEATGLFADRDGYSFKKAVAKAPPGEQFKHLIPLMTRGQRWDVVRPRIVQMFADHLIDLSDCVVLVTWAANFELTCLRYFAKVGREISCNVCTKRATAYNSRTGYYGCWRHSVTCDYLYNPLIVDIQQWGYIGSLSSNHDLYCSVHKGAHVASSDAIMTRCLAVYDCFCNNINWNVEYPIISNELSINTSCRVLQRVMLKAAMLCNRYTLCYDIGNPKAIACVKDFDFKFYDAQPIVKSVKTLLYSFEAHKDSFKDGLCMFWNCNVDKYPPNAVVCRFDTRVLNNLNLPGCNGGSLYVNKHAFHTKPFSRAAFEHLKPMPFFYYSDTPCVYMDGMDAKQVDYVPLKSATCITRCNLGGAVCLKHAEEYREYLESYNTATTAGFTFWVYKTFDFYNLWNTFTKLQSLENVVYNLVKTGHYTGQAGEMPCAIINDKVVAKIDKEDVVIFINNTTYPTNVAVELFAKRSIRHHPELKLFRNLNIDVCWKHVIWDYARESIFCSNTYGVCMYTDLKFIDKLNVLFDGRDNGALEAFKRSNNGVYISTTKVKSLSMIKGPPRAELNGVVVDKVGDTDCVFYFAVRKEGQDVIFSQFDSLRVSSNQSPQGNLGSNEPGNVGGNDALATSTIFTQSRVISSFTCRTDMEKDFIALDQDLFIQKYGLEDYAFEHIVYGNFNQKIIGGLHLLIGLYRRQQTSNLVIQEFVSYDSSIHSYFITDEKSGGSKSVCTVIDILLDDFVALVKSLNLNCVSKVVNVNVDFKDFQFMLWCNDEKVMTFYPRLQAASDWKPGYSMPVLYKYLNSPMERVSLWNYGKPVTLPTGCMMNVAKYTQLCQYLNTTTLAVPVNMRVLHLGAGSEKGVAPGSAVLRQWLPAGTILVDNDLYPFVSDSVATYFGDCITLPFDCQWDLIISDMYDPITKNIGEYNVSKDGFFTYICHMIRDKLALGGSVAIKITEFSWNAELYKLMGYFAFWTVFCTNANASSSEGFLIGINYLGKPKVEIDGNVMHANYLFWRNSTVWNGGAYSLFDMAKFPLKLAGTAVINLRADQINDMVYSLLEKGKLLVRDTNKEVFVGDSLVNVI.

The 143-residue stretch at 54-196 folds into the CoV Nsp1 globular domain; that stretch reads PENHVMVDCR…PWVMYLRKCG (143 aa). One can recognise a BetaCoV Nsp1 C-terminal domain in the interval 216 to 246; that stretch reads FKVEDAYDLVHDEPKGKFSKKAYALIRGYRG. The CoV Nsp2 N-terminal domain occupies 250 to 519; the sequence is LLYVDQYGCD…LICKALYLDY (270 aa). Zn(2+) contacts are provided by Cys392, Cys397, Cys413, and Cys416. A C4 region spans residues 392 to 416; the sequence is CEQDLCDFKGWVPGNMIDGFACTTC. Residues 524 to 713 enclose the CoV Nsp2 middle domain; sequence CGNLHQRELL…AQAFRSVAKV (190 aa). Residues 733 to 851 enclose the CoV Nsp2 C-terminal domain; it reads RRRICLSGSK…LDQAWRVPCA (119 aa). Residues 853–966 form the Ubiquitin-like 1 domain; sequence RRVTFKEQPT…LYCAFTAPED (114 aa). The Peptidase C16 1 domain maps to 1036–1274; sequence DLESVIQDYE…IAQLYGSCIT (239 aa). Catalysis depends on Cys1074, which acts as the For PL1-PRO activity. Residues Cys1151, Cys1154, Cys1177, and Cys1179 each coordinate Zn(2+). The C4-type 1 zinc finger occupies 1151 to 1179; it reads CIKCDLALKLKGLDAMFFYGDVVSHVCKC. Active-site for PL1-PRO activity residues include His1225 and Asp1236. A Macro domain is found at 1275–1435; the sequence is PNVCFVKGDI…LISKCQITAV (161 aa). Residues 1491–1563 form the DPUP domain; it reads DDARTFVQSN…VAQIKALFLD (73 aa). One can recognise a Ubiquitin-like 2 domain in the interval 1562 to 1617; the sequence is LDKVDILLTVDGVNFTNRFVPVGESFGKSLGNVFCDGVNVTKHKCDINYKGKVFFQ. A Peptidase C16 2 domain is found at 1631–1892; that stretch reads SSFNFDQKEL…KIEYNPDLSQ (262 aa). Cys1671 acts as the For PL2-PRO activity in catalysis. Residues Cys1749, Cys1751, Cys1783, and Cys1785 each coordinate Zn(2+). The C4-type 2 zinc-finger motif lies at 1749 to 1785; it reads CKCGVKQEQRTGVDAVMHFGTLSREDLEIGYTVDCSC. Catalysis depends on for PL2-PRO activity residues His1828 and Asp1842. The Nucleic acid-binding domain maps to 1906–2007; that stretch reads IKAQFKTFEK…TYFNRPLLVD (102 aa). In terms of domain architecture, G2M spans 2020-2169; sequence DDGGDISESD…ADNKVIYTTE (150 aa). The next 3 helical transmembrane spans lie at 2138–2158, 2199–2219, and 2227–2247; these read ISACFNFIKWLFVLLFGWIKI, ACIIATIFLLWFNFIYANVIF, and IGFLPTFVGKIAQWIKSTFSL. The tract at residues 2138–2385 is HD1; sequence ISACFNFIKW…ASFIKLFILF (248 aa). Residues 2235–2296 form the 3Ecto domain; sequence GKIAQWIKST…AIDVVQYEAD (62 aa). Cystine bridges form between Cys2251–Cys2275 and Cys2266–Cys2272. Helical transmembrane passes span 2313–2333, 2343–2363, and 2365–2385; these read LIVSYALYTAWFYPLFALISI, LFMLSTLHWSVRLLVSLANML, and AHVFMRFYIIIASFIKLFILF. A Y1 region spans residues 2383–2473; sequence ILFRHVAYGC…ELKRPIQPTD (91 aa). Residues 2383 to 2750 form the CoV Nsp3 Y domain; sequence ILFRHVAYGC…LTTPFSLKGG (368 aa). 8 residues coordinate Zn(2+): His2387, Cys2392, Cys2397, Cys2400, Cys2433, His2436, Cys2440, and Cys2443. The segment at 2387 to 2400 is ZF1; that stretch reads HVAYGCSKPGCLFC. The tract at residues 2433-2443 is ZF2; it reads CSKHQWNCIDC. The interval 2474–2566 is Y2; that stretch reads VAYHTVTDVK…MVDKNLITTA (93 aa). Residues 2474–2750 form a coV-Y region; it reads VAYHTVTDVK…LTTPFSLKGG (277 aa). The segment at 2567–2649 is Y3; that stretch reads NTGTSVTETM…DSVMSAVSAG (83 aa). The Y4 stretch occupies residues 2650 to 2750; the sequence is LELTDESCNN…LTTPFSLKGG (101 aa). A run of 7 helical transmembrane segments spans residues 2752–2772, 2824–2844, 3009–3029, 3031–3051, 3063–3083, 3090–3110, and 3115–3135; these read VFSYFVYVCFLLSLVCFIGLW, STFGLSYYSNSMACPIVVAVV, VFDLIYQLFKGLAQPVDFLAL, ASSIAGAILAVIVVLVFYYLI, IVFVNVIVWCVNFMMLFVFQV, VYAICYFYATLYFPSEISVIM, and LVMYGTIMPLWFCLLYISVVV. An HD2 region spans residues 2752-3135; it reads VFSYFVYVCF…FCLLYISVVV (384 aa). The Nsp4C domain maps to 3149–3246; the sequence is LGTSVRSDGT…TASVSTSFLQ (98 aa). One can recognise a Peptidase C30 domain in the interval 3247 to 3549; that stretch reads SGIVKMVNPT…YQQLAGIKLQ (303 aa). Residues His3287 and Cys3391 each act as for 3CL-PRO activity in the active site. A run of 7 helical transmembrane segments spans residues 3558–3578, 3588–3608, 3614–3634, 3657–3677, 3684–3704, 3711–3731, and 3755–3775; these read GIVCWIMASTFLFSCIITAFV, TNMLSITFCALCVISLAMLLV, YLTMYIIPVLFTLLYNNYLVV, TYTDEVIYGMLLLIGMVFVTL, LFSFIMFVGRVISVVSLWYMG, ILLMLASLFGTYTWTTALSMA, and IVLVCYLFIGYIISCYWGLFS. The interval 3558 to 3775 is HD3; sequence GIVCWIMAST…IISCYWGLFS (218 aa). The RdRp Nsp7 cofactor domain maps to 3837–3925; sequence SKLTDVKCAN…DYAKDNTVLQ (89 aa). Residues 3926–4122 form the RdRp Nsp8 cofactor domain; sequence ALQSEFVNMA…HNEVSATVLQ (197 aa). Positions 4123 to 4232 constitute a Nsp9 ssRNA-binding domain; that stretch reads NNELMPAKLK…GTISSTVRLQ (110 aa). Residues 4233 to 4370 form the ExoN/MTase coactivator domain; it reads AGTATEYASN…CVSTDTTVQS (138 aa). Zn(2+) contacts are provided by Cys4306, Cys4309, His4315, Cys4322, Cys4348, Cys4351, Cys4359, and Cys4361. Zinc fingers lie at residues 4306–4322 and 4348–4361; these read CIYCRARVEHPDVDGLC and CQVCGFWRDGSCSC. Residues 4375-4630 enclose the NiRAN domain; it reads FLNRVRGTSV…DCELYVNNAY (256 aa). Asn4578 and Asp4587 together coordinate Mn(2+). The Nsp12 Interface domain occupies 4631–4729; the sequence is RLFDLVQYDF…MNMDVDTHRY (99 aa). Positions 4660, 4666, 4671, 4675, and 4852 each coordinate Zn(2+). In terms of domain architecture, Nsp12 RNA-dependent RNA polymerase spans 4730-5297; the sequence is RLSLKDLLLY…NMYLRSAVMQ (568 aa). Positions 4732–4946 are rdRp Fingers N-ter; sequence SLKDLLLYAA…HQKCLKSIAA (215 aa). The rdRp Palm N-ter stretch occupies residues 4947–4985; the sequence is TRGVPVVIGTTKFYGGWDDMLRRLIKDVDNPVLMGWDYP. Residues 4977-5139 form the RdRp catalytic domain; that stretch reads PVLMGWDYPK…CYNSDYASKG (163 aa). A rdRp Fingers C-ter region spans residues 4986–5044; that stretch reads KCDRAMPNILRIVSSLVLARKHEACCSQSDRFYRLANECAQVLSEIVMCGGCYYVKPGG. The Zn(2+) site is built by His5007, Cys5010, and Cys5011. The interval 5045–5180 is rdRp Palm C-ter; that stretch reads TSSGDATTAF…NNGPHEFCSQ (136 aa). Catalysis depends on residues Ser5124, Asp5125, and Asp5126. Positions 5181–5297 are rdRp Thumb; it reads HTMLVKMDGD…NMYLRSAVMQ (117 aa). The region spanning 5298–5410 is the CV ZBD domain; that stretch reads SVGACVVCSS…DDFNRIASCK (113 aa). The Zn(2+) site is built by Cys5302, Cys5305, Cys5313, Cys5316, Cys5323, Cys5326, His5330, His5336, Cys5347, Cys5352, Cys5369, and His5372. The (+)RNA virus helicase ATP-binding domain maps to 5553–5734; it reads SVLETFQNNV…MCCLGPDIFL (182 aa). 5578-5585 is a binding site for ATP; sequence GPPGTGKS. Positions 5735–5904 constitute a (+)RNA virus helicase C-terminal domain; sequence GTCYRCPKEI…VETRVQCSTN (170 aa). Residues 5971 to 6186 enclose the ExoN domain; it reads LFITKEEAVK…RCLAVYDCFC (216 aa). Residues Asp5989, Glu5991, and Glu6090 contribute to the active site. 7 residues coordinate Zn(2+): Cys6106, Cys6109, Cys6125, His6128, His6156, Cys6160, and His6163. Residues His6167 and Asp6172 contribute to the active site. Position 6178 (Cys6178) interacts with Zn(2+). The N7-MTase domain occupies 6195 to 6421; it reads YPIISNELSI…NLWNTFTKLQ (227 aa). 6230-6236 is an S-adenosyl-L-methionine binding site; that stretch reads DIGNPKA. The tract at residues 6308–6322 is gpppA-binding; it reads CNGGSLYVNKHAFHT. 4 residues coordinate Zn(2+): Cys6346, Cys6367, Cys6378, and His6381. The Nsp15 N-terminal oligomerization domain occupies 6422 to 6482; it reads SLENVVYNLV…NVAVELFAKR (61 aa). The region spanning 6483-6603 is the AV-Nsp11N/CoV-Nsp15M domain; it reads SIRHHPELKL…FAVRKEGQDV (121 aa). One can recognise a NendoU domain in the interval 6653-6792; that stretch reads TCRTDMEKDF…NDEKVMTFYP (140 aa). Residues His6683, His6698, Lys6738, Lys6841, Asp6925, Lys6965, and Glu6998 contribute to the active site. The Nidovirus-type SAM-dependent 2'-O-MTase domain occupies 6797–7091; the sequence is ASDWKPGYSM…KEVFVGDSLV (295 aa).

It belongs to the coronaviruses polyprotein 1ab family. As to quaternary structure, interacts with host PHB and PHB2. Interacts with papain-like protease nsp3 and non-structural protein 6. In terms of assembly, monomer. Homodimer. Only the homodimer shows catalytic activity. As to quaternary structure, interacts with nsp8 and nsp12 to form the replication-transcription complex (RTC): nsp12, nsp7, two subunits of nsp8, and up to two subunits of nsp13. Interacts with nsp7, nsp13 and nsp12 to form the replication-transcription complex (RTC): nsp12, nsp7, two subunits of nsp8, and up to two subunits of nsp13. In terms of assembly, interacts with nsp12. As to quaternary structure, interacts with proofreading exoribonuclease nsp14 and 2'-O-methyltransferase nsp16; these interactions enhance nsp14 and nsp16 enzymatic activities. Interacts with nsp7 and nsp8 to form the replication-transcription complex (RTC): nsp12, nsp7, two subunits of nsp8, and up to two subunits of nsp13. Interacts with nsp9. In terms of assembly, interacts with nsp8 to form the replication-transcription complex (RTC): nsp12, nsp7, two subunits of nsp8, and up to two subunits of nsp13. Mn(2+) serves as cofactor. It depends on Mg(2+) as a cofactor. In terms of processing, specific enzymatic cleavages in vivo by its own proteases yield mature proteins. 3CL-PRO and PL-PRO proteinases are autocatalytically processed.

The protein localises to the host membrane. The protein resides in the host cytoplasm. Its subcellular location is the host perinuclear region. It localises to the host endoplasmic reticulum-Golgi intermediate compartment. It carries out the reaction RNA(n) + a ribonucleoside 5'-triphosphate = RNA(n+1) + diphosphate. The catalysed reaction is ATP + H2O = ADP + phosphate + H(+). The enzyme catalyses Thiol-dependent hydrolysis of ester, thioester, amide, peptide and isopeptide bonds formed by the C-terminal Gly of ubiquitin (a 76-residue protein attached to proteins as an intracellular targeting signal).. It catalyses the reaction a 5'-end (N(7)-methyl 5'-triphosphoguanosine)-ribonucleoside in mRNA + S-adenosyl-L-methionine = a 5'-end (N(7)-methyl 5'-triphosphoguanosine)-(2'-O-methyl-ribonucleoside) in mRNA + S-adenosyl-L-homocysteine + H(+). It carries out the reaction uridylyl-uridylyl-ribonucleotide-RNA = a 3'-end uridylyl-2',3'-cyclophospho-uridine-RNA + a 5'-end dephospho-ribonucleoside-RNA. The catalysed reaction is a 5'-end diphospho-ribonucleoside in mRNA + GTP + H(+) = a 5'-end (5'-triphosphoguanosine)-ribonucleoside in mRNA + diphosphate. The enzyme catalyses a 5'-end (5'-triphosphoguanosine)-ribonucleoside in mRNA + S-adenosyl-L-methionine = a 5'-end (N(7)-methyl 5'-triphosphoguanosine)-ribonucleoside in mRNA + S-adenosyl-L-homocysteine. Functionally, the replicase polyprotein of coronaviruses is a multifunctional protein: it contains the activities necessary for the transcription of negative stranded RNA, leader RNA, subgenomic mRNAs and progeny virion RNA as well as proteinases responsible for the cleavage of the polyprotein into functional products. Its function is as follows. Inhibits host translation by interacting with the 40S ribosomal subunit. The nsp1-40S ribosome complex further induces an endonucleolytic cleavage near the 5'UTR of host mRNAs, targeting them for degradation. Viral mRNAs are not susceptible to nsp1-mediated endonucleolytic RNA cleavage thanks to the presence of a 5'-end leader sequence and are therefore protected from degradation. By suppressing host gene expression, nsp1 facilitates efficient viral gene expression in infected cells and evasion from host immune response. May play a role in the modulation of host cell survival signaling pathway by interacting with host PHB and PHB2. Indeed, these two proteins play a role in maintaining the functional integrity of the mitochondria and protecting cells from various stresses. In terms of biological role, responsible for the cleavages located at the N-terminus of the replicase polyprotein. In addition, PL-PRO possesses a deubiquitinating/deISGylating activity and processes both 'Lys-48'- and 'Lys-63'-linked polyubiquitin chains from cellular substrates. Participates together with nsp4 in the assembly of virally-induced cytoplasmic double-membrane vesicles necessary for viral replication. Antagonizes innate immune induction of type I interferon by blocking the phosphorylation, dimerization and subsequent nuclear translocation of host IRF3. Also prevents host NF-kappa-B signaling. Functionally, participates in the assembly of virally-induced cytoplasmic double-membrane vesicles necessary for viral replication. Its function is as follows. Cleaves the C-terminus of replicase polyprotein at 11 sites. Recognizes substrates containing the core sequence [ILMVF]-Q-|-[SGACN]. Also able to bind an ADP-ribose-1''-phosphate (ADRP). Plays a role in the initial induction of autophagosomes from host endoplasmic reticulum. Later, limits the expansion of these phagosomes that are no longer able to deliver viral components to lysosomes. In terms of biological role, forms a hexadecamer with nsp8 (8 subunits of each) that may participate in viral replication by acting as a primase. Alternatively, may synthesize substantially longer products than oligonucleotide primers. Functionally, forms a hexadecamer with nsp7 (8 subunits of each) that may participate in viral replication by acting as a primase. Alternatively, may synthesize substantially longer products than oligonucleotide primers. Its function is as follows. Forms a primer, NSP9-pU, which is utilized by the polymerase for the initiation of RNA chains. Interacts with ribosome signal recognition particle RNA (SRP). Together with NSP8, suppress protein integration into the cell membrane, thereby disrupting host immune defenses. Plays a pivotal role in viral transcription by stimulating both nsp14 3'-5' exoribonuclease and nsp16 2'-O-methyltransferase activities. Therefore plays an essential role in viral mRNAs cap methylation. In terms of biological role, RNA-directed RNA polymerase that catalyzes the transcription of viral genomic and subgenomic RNAs. Acts in complex with nsp7 and nsp8 to transcribe both the minus and positive strands of genomic RNA. The kinase-like NiRAN domain of NSP12 attaches one or more nucleotides to the amino terminus of NSP9, forming a covalent RNA-protein intermediate that serves as transcription/replication primer. Subgenomic RNAs (sgRNAs) are formed by discontinuous transcription: The polymerase has the ability to pause at transcription-regulating sequences (TRS) and jump to the leader TRS, resulting in a major deletion. This creates a series of subgenomic RNAs that are replicated, transcribed and translated. In addition, Nsp12 is a subunit of the viral RNA capping enzyme that catalyzes the RNA guanylyltransferase reaction for genomic and sub-genomic RNAs. Subsequently, the NiRAN domain transfers RNA to GDP, and forms the core cap structure GpppA-RNA. Functionally, multi-functional protein with a zinc-binding domain in N-terminus displaying RNA and DNA duplex-unwinding activities with 5' to 3' polarity. Activity of helicase is dependent on magnesium. Its function is as follows. Plays a role in viral RNA synthesis through two distinct activities. The N7-guanine methyltransferase activity plays a role in the formation of the cap structure GpppA-RNA. The proofreading exoribonuclease reduces the sensitivity of the virus to RNA mutagens during replication. This activity acts on both ssRNA and dsRNA in a 3'-5' direction. Plays a role in viral transcription/replication and prevents the simultaneous activation of host cell dsRNA sensors, such as MDA5/IFIH1, OAS, and PKR. Acts by degrading the 5'-polyuridines generated during replication of the poly(A) region of viral genomic and subgenomic RNAs. Catalyzes a two-step reaction in which a 2'3'-cyclic phosphate (2'3'-cP) is first generated by 2'-O transesterification, which is then hydrolyzed to a 3'-phosphate (3'-P). If not degraded, poly(U) RNA would hybridize with poly(A) RNA tails and activate host dsRNA sensors. In terms of biological role, methyltransferase that mediates mRNA cap 2'-O-ribose methylation to the 5'-cap structure of viral mRNAs. N7-methyl guanosine cap is a prerequisite for binding of nsp16. Therefore plays an essential role in viral mRNAs cap methylation which is essential to evade immune system. The sequence is that of Replicase polyprotein 1ab (rep) from Bos taurus (Bovine).